The following is a 280-amino-acid chain: 3-methyl-2-oxobutanoate hydroxymethyltransferase (280 aa).

Mg(2+)-binding residues include aspartate 49 and aspartate 88. 3-methyl-2-oxobutanoate contacts are provided by residues 49-50 (DS), aspartate 88, and lysine 118. A Mg(2+)-binding site is contributed by glutamate 120. Residue glutamate 187 is the Proton acceptor of the active site.

The protein belongs to the PanB family. In terms of assembly, homodecamer; pentamer of dimers. Mg(2+) serves as cofactor.

Its subcellular location is the cytoplasm. It catalyses the reaction 3-methyl-2-oxobutanoate + (6R)-5,10-methylene-5,6,7,8-tetrahydrofolate + H2O = 2-dehydropantoate + (6S)-5,6,7,8-tetrahydrofolate. The protein operates within cofactor biosynthesis; (R)-pantothenate biosynthesis; (R)-pantoate from 3-methyl-2-oxobutanoate: step 1/2. Catalyzes the reversible reaction in which hydroxymethyl group from 5,10-methylenetetrahydrofolate is transferred onto alpha-ketoisovalerate to form ketopantoate. The polypeptide is 3-methyl-2-oxobutanoate hydroxymethyltransferase (Xanthobacter autotrophicus (strain ATCC BAA-1158 / Py2)).